The sequence spans 234 residues: Purine nucleoside phosphorylase DeoD-type (234 aa).

A purine D-ribonucleoside is bound at residue His-5. Phosphate is bound by residues Gly-21, Arg-25, Arg-44, and 88-91 (RIGS). Residues 180-182 (EME) and 204-205 (SD) each bind a purine D-ribonucleoside. Asp-205 serves as the catalytic Proton donor.

This sequence belongs to the PNP/UDP phosphorylase family. As to quaternary structure, homohexamer; trimer of homodimers.

The enzyme catalyses a purine D-ribonucleoside + phosphate = a purine nucleobase + alpha-D-ribose 1-phosphate. The catalysed reaction is a purine 2'-deoxy-D-ribonucleoside + phosphate = a purine nucleobase + 2-deoxy-alpha-D-ribose 1-phosphate. Functionally, catalyzes the reversible phosphorolytic breakdown of the N-glycosidic bond in the beta-(deoxy)ribonucleoside molecules, with the formation of the corresponding free purine bases and pentose-1-phosphate. The chain is Purine nucleoside phosphorylase DeoD-type from Colwellia psychrerythraea (strain 34H / ATCC BAA-681) (Vibrio psychroerythus).